The sequence spans 331 residues: UPF0194 membrane protein YbhG (331 aa).

Residues 1-15 (MKKPVVIGLAVVVLA) form the signal peptide. A coiled-coil region spans residues 107 to 208 (EEIAQAAAAV…LNLQDSTLIA (102 aa)).

It belongs to the UPF0194 family.

The protein localises to the periplasm. The protein is UPF0194 membrane protein YbhG of Escherichia coli O157:H7 (strain EC4115 / EHEC).